Consider the following 180-residue polypeptide: Large ribosomal subunit protein uL5 (180 aa).

Belongs to the universal ribosomal protein uL5 family. As to quaternary structure, part of the 50S ribosomal subunit; part of the 5S rRNA/L5/L18/L25 subcomplex. Contacts the 5S rRNA and the P site tRNA. Forms a bridge to the 30S subunit in the 70S ribosome.

Its function is as follows. This is one of the proteins that bind and probably mediate the attachment of the 5S RNA into the large ribosomal subunit, where it forms part of the central protuberance. In the 70S ribosome it contacts protein S13 of the 30S subunit (bridge B1b), connecting the 2 subunits; this bridge is implicated in subunit movement. Contacts the P site tRNA; the 5S rRNA and some of its associated proteins might help stabilize positioning of ribosome-bound tRNAs. The sequence is that of Large ribosomal subunit protein uL5 from Acholeplasma laidlawii (strain PG-8A).